The sequence spans 141 residues: Acetyltransferase YpeA (141 aa).

In terms of domain architecture, N-acetyltransferase spans 1 to 141; that stretch reads MEIRVFRQED…GKRLIEDEEY (141 aa).

The protein belongs to the acetyltransferase family. YpeA subfamily.

The sequence is that of Acetyltransferase YpeA from Escherichia coli O157:H7.